The primary structure comprises 170 residues: Acireductone dioxygenase (170 aa).

Positions 99, 101, 105, and 144 each coordinate Fe(2+). Ni(2+) is bound by residues His99, His101, Glu105, and His144.

This sequence belongs to the acireductone dioxygenase (ARD) family. As to quaternary structure, monomer. It depends on Fe(2+) as a cofactor. Ni(2+) is required as a cofactor.

It carries out the reaction 1,2-dihydroxy-5-(methylsulfanyl)pent-1-en-3-one + O2 = 3-(methylsulfanyl)propanoate + CO + formate + 2 H(+). It catalyses the reaction 1,2-dihydroxy-5-(methylsulfanyl)pent-1-en-3-one + O2 = 4-methylsulfanyl-2-oxobutanoate + formate + 2 H(+). The protein operates within amino-acid biosynthesis; L-methionine biosynthesis via salvage pathway; L-methionine from S-methyl-5-thio-alpha-D-ribose 1-phosphate: step 5/6. Functionally, catalyzes 2 different reactions between oxygen and the acireductone 1,2-dihydroxy-3-keto-5-methylthiopentene (DHK-MTPene) depending upon the metal bound in the active site. Fe-containing acireductone dioxygenase (Fe-ARD) produces formate and 2-keto-4-methylthiobutyrate (KMTB), the alpha-ketoacid precursor of methionine in the methionine recycle pathway. Ni-containing acireductone dioxygenase (Ni-ARD) produces methylthiopropionate, carbon monoxide and formate, and does not lie on the methionine recycle pathway. In Bacillus thuringiensis (strain Al Hakam), this protein is Acireductone dioxygenase.